Consider the following 286-residue polypeptide: Bifunctional protein FolD (286 aa).

NADP(+)-binding positions include 164–166 (GRS), Ser-193, and Ile-234.

The protein belongs to the tetrahydrofolate dehydrogenase/cyclohydrolase family. Homodimer.

It catalyses the reaction (6R)-5,10-methylene-5,6,7,8-tetrahydrofolate + NADP(+) = (6R)-5,10-methenyltetrahydrofolate + NADPH. The catalysed reaction is (6R)-5,10-methenyltetrahydrofolate + H2O = (6R)-10-formyltetrahydrofolate + H(+). Its pathway is one-carbon metabolism; tetrahydrofolate interconversion. Its function is as follows. Catalyzes the oxidation of 5,10-methylenetetrahydrofolate to 5,10-methenyltetrahydrofolate and then the hydrolysis of 5,10-methenyltetrahydrofolate to 10-formyltetrahydrofolate. This chain is Bifunctional protein FolD, found in Oleidesulfovibrio alaskensis (strain ATCC BAA-1058 / DSM 17464 / G20) (Desulfovibrio alaskensis).